The following is a 199-amino-acid chain: MSELITGQYLSEFINRFQLQLPQPDNVLTHSHYFSATNRRAAVLIPIICRPEPTLLLTRRADHLRKHAGQVAFPGGKADPDDQSLISTALREAEEEVAIPASVVHVLGKLAPLNSSSGYHVTPIVGLVPANIPFYGNDEEVAGLFEIPLHEALSLSRYHSLDIHREGINHRVYLSWYENQFIWGLTATIIRHLAQQVSI.

The Nudix hydrolase domain maps to 38-169; the sequence is NRRAAVLIPI…SLDIHREGIN (132 aa). The short motif at 76–98 is the Nudix box element; that stretch reads GKADPDDQSLISTALREAEEEVA. Residues Glu92 and Glu96 each coordinate Mg(2+).

It belongs to the Nudix hydrolase family. PCD1 subfamily. Mn(2+) serves as cofactor. Requires Mg(2+) as cofactor.

Functionally, probably mediates the hydrolysis of some nucleoside diphosphate derivatives. This is an uncharacterized protein from Yersinia pseudotuberculosis serotype I (strain IP32953).